The following is a 481-amino-acid chain: UDP-glycosyltransferase 72B3 (481 aa).

Residues Ser277, 347-349 (APQ), 364-372 (HCGWNSSLE), and 386-389 (YAEQ) contribute to the UDP-alpha-D-glucose site.

It belongs to the UDP-glycosyltransferase family.

Its function is as follows. Possesses low quercetin 3-O-glucosyltransferase activity in vitro. The sequence is that of UDP-glycosyltransferase 72B3 (UGT72B3) from Arabidopsis thaliana (Mouse-ear cress).